Reading from the N-terminus, the 276-residue chain is UPF0276 protein AM1_3026 (276 aa).

It belongs to the UPF0276 family.

The polypeptide is UPF0276 protein AM1_3026 (Acaryochloris marina (strain MBIC 11017)).